The sequence spans 448 residues: Tubulin alpha-2 chain (448 aa).

GTP contacts are provided by Gln-11, Glu-69, Ser-138, Gly-142, Thr-143, Thr-177, Asn-204, and Asn-226. Glu-69 is a Mg(2+) binding site. Glu-252 is a catalytic residue. The interval Lys-428–Tyr-448 is disordered. Residues Asp-429–Tyr-448 show a composition bias toward acidic residues.

The protein belongs to the tubulin family. As to quaternary structure, dimer of alpha and beta chains. A typical microtubule is a hollow water-filled tube with an outer diameter of 25 nm and an inner diameter of 15 nM. Alpha-beta heterodimers associate head-to-tail to form protofilaments running lengthwise along the microtubule wall with the beta-tubulin subunit facing the microtubule plus end conferring a structural polarity. Microtubules usually have 13 protofilaments but different protofilament numbers can be found in some organisms and specialized cells. Mg(2+) is required as a cofactor. In terms of processing, undergoes a tyrosination/detyrosination cycle, the cyclic removal and re-addition of a C-terminal tyrosine residue. In terms of tissue distribution, expressed in intestine, pharyngeal muscle cells, and a subset of neurons.

It localises to the cytoplasm. It is found in the cytoskeleton. The enzyme catalyses GTP + H2O = GDP + phosphate + H(+). Tubulin is the major constituent of microtubules, a cylinder consisting of laterally associated linear protofilaments composed of alpha- and beta-tubulin heterodimers. Microtubules grow by the addition of GTP-tubulin dimers to the microtubule end, where a stabilizing cap forms. Below the cap, tubulin dimers are in GDP-bound state, owing to GTPase activity of alpha-tubulin. Required for the normal dynamic behavior of the non-centrosomal microtubules in the epidermal syncytium. Involved in the redistribution of microtubule end-binding protein EB1/ebp-2 caused by wounding. Required to modulate expression in the epidermis of antimicrobial peptides, such as nlp-29, after wounding, or fungal infection. In Caenorhabditis elegans, this protein is Tubulin alpha-2 chain (tba-2).